The primary structure comprises 175 residues: Disulfide bond formation protein B (175 aa).

Residues 1 to 13 (MTAFTRFAHSRAS) lie on the Cytoplasmic side of the membrane. Residues 14-30 (WFILTGSAIALEAAALY) form a helical membrane-spanning segment. Residues 31–48 (FQYVMKLDPCVMCIYQRL) are Periplasmic-facing. C40 and C43 are joined by a disulfide. Residues 49–64 (AVFGILASGLIGMTAP) traverse the membrane as a helical segment. Residues 65–71 (KFLIVRI) are Cytoplasmic-facing. The chain crosses the membrane as a helical span at residues 72 to 89 (LGAIGWAVSATWGLKLAL). At 90-144 (ALVDMQNNPSPFSTCSFLPEFPAWMPLHEWFPSVMLPTGMCTDVPWQFMGVTMAE) the chain is on the periplasmic side. The cysteines at positions 104 and 130 are disulfide-linked. Residues 145–163 (WMVVAFSGYLVALLLFIVP) traverse the membrane as a helical segment. The Cytoplasmic segment spans residues 164–175 (ILSGSNKPSLYK).

Belongs to the DsbB family.

The protein resides in the cell inner membrane. Its function is as follows. Required for disulfide bond formation in some periplasmic proteins. Acts by oxidizing the DsbA protein. The chain is Disulfide bond formation protein B from Shewanella sp. (strain ANA-3).